The chain runs to 174 residues: FMN reductase (NADH) SmoA (174 aa).

It belongs to the non-flavoprotein flavin reductase family.

The catalysed reaction is FMNH2 + NAD(+) = FMN + NADH + 2 H(+). Part of the sulfoquinovose monooxygenase (sulfo-SMO) pathway, a D-sulfoquinovose degradation pathway that enables the complete utilization of all carbons within sulfoquinovose (SQ) with concomitant production of inorganic sulfite. Catalyzes the NADH-dependent reduction of FMN. FMNH(2) is then transferred to the sulfoquinovose monooxygenase SmoC. In Agrobacterium fabrum (strain C58 / ATCC 33970) (Agrobacterium tumefaciens (strain C58)), this protein is FMN reductase (NADH) SmoA.